Here is a 555-residue protein sequence, read N- to C-terminus: Disabled homolog 1 (555 aa).

The interval 1–26 (MSTETELQVAVKTSAKKDSRKKGQDR) is disordered. A compositionally biased stretch (basic and acidic residues) spans 15–26 (AKKDSRKKGQDR). One can recognise a PID domain in the interval 36 to 189 (KGEGVRYKAK…CEQAVYQTIL (154 aa)). A phosphotyrosine mark is found at Tyr-198, Tyr-220, and Tyr-232. 3 disordered regions span residues 384-410 (LTPL…RQKM), 418-437 (FQMA…PSLT), and 468-555 (NLTP…QAGS). Over residues 391-403 (PGTSDSTRPSPQT) the composition is skewed to polar residues. Composition is skewed to low complexity over residues 470 to 479 (TPVTSTTPST) and 487 to 501 (PRQS…SHAS). Ser-491 carries the post-translational modification Phosphoserine; by CDK5. The span at 504 to 513 (TTDDIFEEGF) shows a compositional bias: acidic residues.

As to quaternary structure, associates with the SH2 domains of SRC, FYN and ABL. Interacts (phosphorylated on tyrosine residues) with CRK and CRKL (via respective SH2 domain). Interacts with DAB2IP, SIAH1, LRP8 and VLDLR. Interacts with LRP1. Interacts with APLP1 (via NPXY motif). Interacts with DAB2IP. Interacts with ZSWIM8. Post-translationally, phosphorylated by FYN on Tyr-198 and Tyr-220 upon reelin induction in embryonic neurons. Also phosphorylated on Ser-491 independently of reelin signaling. Ubiquitinated by various cullin-5-RING E3 ubiquitin-protein ligase complexes (ECS complexes) following ligand-binding and phosphorylation, leading to its degradation. Ubiquitinated by the ECS(SOCS7) complex in the cortical plate of the developing cerebral cortex following ligand-binding and phosphorylation by FYN, leading to its degradation by the proteasome. Recognized by ZSWIM8 through a disorder targets misorder mechanism that eliminates misfolded DAB1 via ubiquitination and proteasomal degradation.

It localises to the cytoplasm. Signaling adapter of the reelin-mediated signaling pathway, which regulates the migration and differentiation of postmitotic neurons during brain development. Mediates intracellular transduction of Reelin signaling following reelin (RELN)-binding to its receptor: acts by docking proteins through its phosphotyrosine residues and PID domain. The protein is Disabled homolog 1 (DAB1) of Macaca fascicularis (Crab-eating macaque).